The primary structure comprises 102 residues: uncharacterized protein (102 aa).

The [3Fe-4S] cluster site is built by Cys10, Cys16, and Cys55. Residues 66–102 form a disordered region; that stretch reads DAGDDERASADPARSPAEAERHAAKDQRIPGGHDGTV. The span at 82–93 shows a compositional bias: basic and acidic residues; it reads AEAERHAAKDQR.

[3Fe-4S] cluster is required as a cofactor.

Its function is as follows. Electron transport protein for the cytochrome systems. This is an uncharacterized protein from Sinorhizobium fredii (strain NBRC 101917 / NGR234).